Here is a 347-residue protein sequence, read N- to C-terminus: Bifunctional methylenetetrahydrofolate dehydrogenase/cyclohydrolase 2, mitochondrial (347 aa).

Residues 98-102 (YVRNK) and 145-147 (VQL) contribute to the substrate site. NAD(+) is bound by residues 214 to 216 (GRS) and R247. 323 to 327 (PGGVG) serves as a coordination point for substrate.

It belongs to the tetrahydrofolate dehydrogenase/cyclohydrolase family. Mg(2+) is required as a cofactor. Isoform 1, isoform 4 and isoform 5 are expressed in brain and placenta.

The protein resides in the mitochondrion inner membrane. The catalysed reaction is (6R)-5,10-methylene-5,6,7,8-tetrahydrofolate + NAD(+) = (6R)-5,10-methenyltetrahydrofolate + NADH. It carries out the reaction (6R)-5,10-methenyltetrahydrofolate + H2O = (6R)-10-formyltetrahydrofolate + H(+). The enzyme catalyses (6R)-5,10-methylene-5,6,7,8-tetrahydrofolate + NADP(+) = (6R)-5,10-methenyltetrahydrofolate + NADPH. It functions in the pathway one-carbon metabolism; tetrahydrofolate interconversion. Bifunctional mitochondrial folate-interconverting enzyme that has both NAD/NADP-dependent methylenetetrahydrofolate dehydrogenase and methenyltetrahydrofolate cyclohydrolase activities. The sequence is that of Bifunctional methylenetetrahydrofolate dehydrogenase/cyclohydrolase 2, mitochondrial from Homo sapiens (Human).